The primary structure comprises 93 residues: HssA/B-like protein 23 (93 aa).

It belongs to the hssA/B family.

This is HssA/B-like protein 23 (hssl23) from Dictyostelium discoideum (Social amoeba).